The chain runs to 349 residues: GDP-mannose:glycolipid 4-beta-D-mannosyltransferase (349 aa).

The first 14 residues, 1–14 (MSASASLPVTRAAA), serve as a signal peptide directing secretion.

It belongs to the glycosyltransferase 94 family.

It localises to the cell inner membrane. The catalysed reaction is beta-D-GlcA-(1-&gt;2)-alpha-D-Man-(1-&gt;3)-beta-D-Glc-(1-&gt;4)-alpha-D-Glc-di-trans,octa-cis-undecaprenyl diphosphate + GDP-alpha-D-mannose = beta-D-Man-(1-&gt;4)-beta-D-GlcA-(1-&gt;2)-alpha-D-Man-(1-&gt;3)-beta-D-Glc-(1-&gt;4)-alpha-D-Glc-di-trans,octa-cis-undecaprenyl diphosphate + GDP + H(+). It participates in glycan biosynthesis; xanthan biosynthesis. In terms of biological role, nonprocessive beta-mannosyltransferase that catalyzes the transfer of a mannose residue from GDP-mannose to glucuronic acid-beta-1,2-mannose-alpha-1,3-glucose-beta-1,4-glucose-PP-polyisoprenyl to form the lipid-linked pentasaccharide repeating unit of xanthan, Man-GlcA-Man-Glc(2)-PP-Pol. Is involved in the biosynthesis of the exopolysaccharide xanthan. To a lesser extent, can also use ADP-Man and even GDP-Glc as sugar donor substrates in vitro. Is unable to transfer a Man residue to the free-tetrasaccharide GlcA-Man-Glc(2) used as an acceptor, which indicates that the diphosphate group and the lipid moiety in the acceptor substrate are of major importance for acceptor binding and catalysis. The polypeptide is GDP-mannose:glycolipid 4-beta-D-mannosyltransferase (gumI) (Xanthomonas campestris pv. campestris).